The primary structure comprises 674 residues: MNHSNQMHHDNHESHNHHSGHAHHHGNFKVKFFVSLIFAIPIILLSPLMGVNLPFQFTFPGSEWVVLILSTILFFYGGKPFLSGGKDEIATKKPGMMTLVALGISVAYIYSLYAFYMNNFSSATGHTMDFFWELATLILIMLLGHWIEMNAVGNAGDALKKMAELLPNSAIKVMDNGQREEVKISDIMTDDIVEVKAGESIPTDGIIVQGQTSIDESLVTGESKKVQKNQNDNVIGGSINGSGTIQVKVTAVGEDGYLSQVMGLVNQAQNDKSSAELLSDKVAGYLFYFAVSVGVISFIVWMLIQNDVDFALERLVTVLVIACPHALGLAIPLVTARSTSIGAHNGLIIKNRESVEIAQHIDYVMMDKTGTLTEGNFSVNHYESFKNDLSNDTILSLFASLESQSNHPLAISIVDFAKSKNVSFTNPQDVNNIPGVGLEGLIHNKTYKITNVSYLDQHGFEYDNDLFIKLAQQGNSISYLIEDQQVIGMIAQGDQIKESSKQMVADLLSRNITPVMLTGDNNEVAHAVAKELGISDVHAQLMPEDKESIIKDYQSNGNKVMMVGDGINDAPSLIRADIGIAIGAGTDVAVDSGDIILVKSNPSDIIHFLTLSNNTMRKMVQNLWWGAGYNIVAVPLAAGILAFIGLILSPAIGAILMSLSTVIVAINAFTLKLK.

Residues 1–22 (MNHSNQMHHDNHESHNHHSGHA) are disordered. Residues 7-16 (MHHDNHESHN) are compositionally biased toward basic and acidic residues. 6 helical membrane passes run 32–52 (FFVS…MGVN), 57–77 (FTFP…FFYG), 95–115 (GMMT…LYAF), 127–147 (TMDF…GHWI), 284–304 (GYLF…WMLI), and 315–335 (LVTV…PLVT). Catalysis depends on aspartate 367, which acts as the 4-aspartylphosphate intermediate. Aspartate 565 and aspartate 569 together coordinate Mg(2+). The next 2 helical transmembrane spans lie at 623–645 (LWWG…AFIG) and 649–671 (SPAI…AFTL).

This sequence belongs to the cation transport ATPase (P-type) (TC 3.A.3) family. Type IB subfamily.

It localises to the cell membrane. It carries out the reaction Cu(+)(in) + ATP + H2O = Cu(+)(out) + ADP + phosphate + H(+). In terms of biological role, involved in copper transport. This is Probable copper-transporting P-type ATPase B (copB) from Staphylococcus epidermidis (strain ATCC 35984 / DSM 28319 / BCRC 17069 / CCUG 31568 / BM 3577 / RP62A).